The sequence spans 404 residues: Probable tRNA sulfurtransferase (404 aa).

The 106-residue stretch at 60 to 165 (QPIVEALKLV…DEAAYISYEE (106 aa)) folds into the THUMP domain. ATP contacts are provided by residues 183-184 (ML), 208-209 (HF), Arg265, Gly287, and Gln296.

It belongs to the ThiI family.

The protein resides in the cytoplasm. The enzyme catalyses [ThiI sulfur-carrier protein]-S-sulfanyl-L-cysteine + a uridine in tRNA + 2 reduced [2Fe-2S]-[ferredoxin] + ATP + H(+) = [ThiI sulfur-carrier protein]-L-cysteine + a 4-thiouridine in tRNA + 2 oxidized [2Fe-2S]-[ferredoxin] + AMP + diphosphate. It carries out the reaction [ThiS sulfur-carrier protein]-C-terminal Gly-Gly-AMP + S-sulfanyl-L-cysteinyl-[cysteine desulfurase] + AH2 = [ThiS sulfur-carrier protein]-C-terminal-Gly-aminoethanethioate + L-cysteinyl-[cysteine desulfurase] + A + AMP + 2 H(+). Its pathway is cofactor biosynthesis; thiamine diphosphate biosynthesis. Functionally, catalyzes the ATP-dependent transfer of a sulfur to tRNA to produce 4-thiouridine in position 8 of tRNAs, which functions as a near-UV photosensor. Also catalyzes the transfer of sulfur to the sulfur carrier protein ThiS, forming ThiS-thiocarboxylate. This is a step in the synthesis of thiazole, in the thiamine biosynthesis pathway. The sulfur is donated as persulfide by IscS. The protein is Probable tRNA sulfurtransferase of Streptococcus pyogenes serotype M2 (strain MGAS10270).